A 170-amino-acid chain; its full sequence is Acireductone dioxygenase (170 aa).

His-99, His-101, Glu-105, and His-144 together coordinate Fe(2+). Residues His-99, His-101, Glu-105, and His-144 each contribute to the Ni(2+) site.

It belongs to the acireductone dioxygenase (ARD) family. In terms of assembly, monomer. Fe(2+) is required as a cofactor. Ni(2+) serves as cofactor.

The catalysed reaction is 1,2-dihydroxy-5-(methylsulfanyl)pent-1-en-3-one + O2 = 3-(methylsulfanyl)propanoate + CO + formate + 2 H(+). It carries out the reaction 1,2-dihydroxy-5-(methylsulfanyl)pent-1-en-3-one + O2 = 4-methylsulfanyl-2-oxobutanoate + formate + 2 H(+). It functions in the pathway amino-acid biosynthesis; L-methionine biosynthesis via salvage pathway; L-methionine from S-methyl-5-thio-alpha-D-ribose 1-phosphate: step 5/6. Its function is as follows. Catalyzes 2 different reactions between oxygen and the acireductone 1,2-dihydroxy-3-keto-5-methylthiopentene (DHK-MTPene) depending upon the metal bound in the active site. Fe-containing acireductone dioxygenase (Fe-ARD) produces formate and 2-keto-4-methylthiobutyrate (KMTB), the alpha-ketoacid precursor of methionine in the methionine recycle pathway. Ni-containing acireductone dioxygenase (Ni-ARD) produces methylthiopropionate, carbon monoxide and formate, and does not lie on the methionine recycle pathway. In Bacillus thuringiensis (strain Al Hakam), this protein is Acireductone dioxygenase.